The following is a 426-amino-acid chain: Phosphomethylpyrimidine synthase (426 aa).

Substrate-binding positions include Asn-66, Met-95, Tyr-124, His-163, 185–187 (SRG), 226–229 (DGLR), and Glu-265. Zn(2+) is bound at residue His-269. Tyr-292 is a substrate binding site. His-333 serves as a coordination point for Zn(2+). Positions 407, 410, and 414 each coordinate [4Fe-4S] cluster.

It belongs to the ThiC family. The cofactor is [4Fe-4S] cluster.

It carries out the reaction 5-amino-1-(5-phospho-beta-D-ribosyl)imidazole + S-adenosyl-L-methionine = 4-amino-2-methyl-5-(phosphooxymethyl)pyrimidine + CO + 5'-deoxyadenosine + formate + L-methionine + 3 H(+). Its pathway is cofactor biosynthesis; thiamine diphosphate biosynthesis. In terms of biological role, catalyzes the synthesis of the hydroxymethylpyrimidine phosphate (HMP-P) moiety of thiamine from aminoimidazole ribotide (AIR) in a radical S-adenosyl-L-methionine (SAM)-dependent reaction. In Thermococcus gammatolerans (strain DSM 15229 / JCM 11827 / EJ3), this protein is Phosphomethylpyrimidine synthase.